The sequence spans 354 residues: MTSNKIKVLCVDDSALIRDLMSKIIDSQPDMEVVATAPDPLVARDLIKRTNPDVLTLDVEMPRMDGLDFLERLMRLRPMPVLMVSSLTQKGSEITLRALELGAVDFVAKPEMGIREGMLEYTEMIADMIRAAARSRPRAVAKQPPAKDKAPLKAPLLSSEKVIIIGASTGGTEAIRHVLEPLPANSPAVLITQHMPGGFTKSFAERLDKLCRISVKEAVDGERVLPGHAYIAPGDWHMKLARSGANYVIRLDDAPPVNRHRPSVDVLFHSAAQSAGRNAIGVILTGMGRDGAAGLLEMRQAGSYTLAQDEESCVVFGMPREAIVAGAAIDTIALSEIPAALMKRAEASGRAQRV.

One can recognise a Response regulatory domain in the interval 7-124 (KVLCVDDSAL…REGMLEYTEM (118 aa)). The residue at position 58 (aspartate 58) is a 4-aspartylphosphate. One can recognise a CheB-type methylesterase domain in the interval 156–348 (LLSSEKVIII…AALMKRAEAS (193 aa)). Catalysis depends on residues serine 168, histidine 194, and aspartate 290.

This sequence belongs to the CheB family. Post-translationally, phosphorylated by CheA. Phosphorylation of the N-terminal regulatory domain activates the methylesterase activity.

The protein resides in the cytoplasm. It carries out the reaction [protein]-L-glutamate 5-O-methyl ester + H2O = L-glutamyl-[protein] + methanol + H(+). The enzyme catalyses L-glutaminyl-[protein] + H2O = L-glutamyl-[protein] + NH4(+). Its function is as follows. Involved in chemotaxis. Part of a chemotaxis signal transduction system that modulates chemotaxis in response to various stimuli. Catalyzes the demethylation of specific methylglutamate residues introduced into the chemoreceptors (methyl-accepting chemotaxis proteins or MCP) by CheR. Also mediates the irreversible deamidation of specific glutamine residues to glutamic acid. The polypeptide is Protein-glutamate methylesterase/protein-glutamine glutaminase (Chromohalobacter salexigens (strain ATCC BAA-138 / DSM 3043 / CIP 106854 / NCIMB 13768 / 1H11)).